The chain runs to 740 residues: Phosphoribosylformylglycinamidine synthase subunit PurL (740 aa).

Residue His-53 is part of the active site. Residues Tyr-56 and Lys-95 each coordinate ATP. Residue Glu-97 coordinates Mg(2+). Substrate contacts are provided by residues 98-101 (SHNH) and Arg-120. His-99 acts as the Proton acceptor in catalysis. A Mg(2+)-binding site is contributed by Asp-121. Position 244 (Gln-244) interacts with substrate. Asp-274 contributes to the Mg(2+) binding site. 318 to 320 (ESQ) is a substrate binding site. ATP contacts are provided by Asp-501 and Gly-538. Residue Asn-539 participates in Mg(2+) binding. Ser-541 contributes to the substrate binding site.

The protein belongs to the FGAMS family. As to quaternary structure, monomer. Part of the FGAM synthase complex composed of 1 PurL, 1 PurQ and 2 PurS subunits.

Its subcellular location is the cytoplasm. The catalysed reaction is N(2)-formyl-N(1)-(5-phospho-beta-D-ribosyl)glycinamide + L-glutamine + ATP + H2O = 2-formamido-N(1)-(5-O-phospho-beta-D-ribosyl)acetamidine + L-glutamate + ADP + phosphate + H(+). The protein operates within purine metabolism; IMP biosynthesis via de novo pathway; 5-amino-1-(5-phospho-D-ribosyl)imidazole from N(2)-formyl-N(1)-(5-phospho-D-ribosyl)glycinamide: step 1/2. In terms of biological role, part of the phosphoribosylformylglycinamidine synthase complex involved in the purines biosynthetic pathway. Catalyzes the ATP-dependent conversion of formylglycinamide ribonucleotide (FGAR) and glutamine to yield formylglycinamidine ribonucleotide (FGAM) and glutamate. The FGAM synthase complex is composed of three subunits. PurQ produces an ammonia molecule by converting glutamine to glutamate. PurL transfers the ammonia molecule to FGAR to form FGAM in an ATP-dependent manner. PurS interacts with PurQ and PurL and is thought to assist in the transfer of the ammonia molecule from PurQ to PurL. The polypeptide is Phosphoribosylformylglycinamidine synthase subunit PurL (Lactobacillus delbrueckii subsp. bulgaricus (strain ATCC 11842 / DSM 20081 / BCRC 10696 / JCM 1002 / NBRC 13953 / NCIMB 11778 / NCTC 12712 / WDCM 00102 / Lb 14)).